Consider the following 257-residue polypeptide: Probable septum site-determining protein MinC (257 aa).

A compositionally biased stretch (low complexity) spans 123-141 (AVEAAAAPAAEPTPEPGAA). The interval 123–144 (AVEAAAAPAAEPTPEPGAASQP) is disordered.

Belongs to the MinC family. In terms of assembly, interacts with MinD and FtsZ.

Its function is as follows. Cell division inhibitor that blocks the formation of polar Z ring septums. Rapidly oscillates between the poles of the cell to destabilize FtsZ filaments that have formed before they mature into polar Z rings. Prevents FtsZ polymerization. The chain is Probable septum site-determining protein MinC from Burkholderia multivorans (strain ATCC 17616 / 249).